The chain runs to 288 residues: Putative aryl-alcohol dehydrogenase AAD10 (288 aa).

The protein belongs to the aldo/keto reductase family. Aldo/keto reductase 2 subfamily.

This chain is Putative aryl-alcohol dehydrogenase AAD10 (AAD10), found in Saccharomyces cerevisiae (strain ATCC 204508 / S288c) (Baker's yeast).